A 701-amino-acid polypeptide reads, in one-letter code: Protein mono-ADP-ribosyltransferase PARP12 (701 aa).

3 consecutive C3H1-type zinc fingers follow at residues 94-119 (LCRF…HSLT), 150-179 (WLLP…IKLH), and 180-202 (ICQY…HDFS). A disordered region spans residues 234–268 (KNKSSAPSRVPPLFVPQGTSERKDSSGSVSPNTLS). Ser258 carries the post-translational modification Phosphoserine. Residues 259 to 268 (SGSVSPNTLS) are compositionally biased toward polar residues. 2 C3H1-type zinc fingers span residues 270 to 297 (EEGD…HFHL) and 271 to 296 (EGDQ…VHFH). 2 WWE domains span residues 298–361 (PYRW…RLST) and 364–458 (SVTK…KVCR). Cys474 bears the ADP-ribosylcysteine mark. Residues 484–698 (IPDYWDSSAL…ILLALGSLFS (215 aa)) enclose the PARP catalytic domain. ADP-ribosyl aspartic acid occurs at positions 600 and 611.

Belongs to the ARTD/PARP family. In terms of assembly, interacts with PARP11; this interaction plays a key role in zika virus suppression. Interacts with ISG15. In terms of processing, auto-mono-ADP-ribosylated. Post-translationally, phosphorylated by PRKD1.

The protein localises to the nucleus. It localises to the golgi apparatus. Its subcellular location is the trans-Golgi network. It is found in the cytoplasm. The protein resides in the stress granule. The catalysed reaction is L-aspartyl-[protein] + NAD(+) = 4-O-(ADP-D-ribosyl)-L-aspartyl-[protein] + nicotinamide. The enzyme catalyses L-cysteinyl-[protein] + NAD(+) = S-(ADP-D-ribosyl)-L-cysteinyl-[protein] + nicotinamide + H(+). In terms of biological role, mono-ADP-ribosyltransferase that mediates mono-ADP-ribosylation of target proteins. Acts as an antiviral factor by cooperating with PARP11 to suppress Zika virus replication. Displays anti-alphavirus activity during IFN-gamma immune activation by directly ADP-ribosylating the alphaviral non-structural proteins nsP3 and nsP4. Acts as a component of the PRKD1-driven regulatory cascade that selectively controls a major branch of the basolateral transport pathway by catalyzing the MARylation of GOLGA1. Acts also as a key regulator of mitochondrial function, protein translation, and inflammation. Inhibits PINK1/Parkin-dependent mitophagy and promotes cartilage degeneration by inhibiting the ubiquitination and SUMOylation of MFN1/2 by upregulating ISG15 and ISGylation. In Homo sapiens (Human), this protein is Protein mono-ADP-ribosyltransferase PARP12.